We begin with the raw amino-acid sequence, 264 residues long: Small ribosomal subunit protein uS2 (264 aa).

Belongs to the universal ribosomal protein uS2 family.

The protein is Small ribosomal subunit protein uS2 (rpsB) of Helicobacter pylori (strain ATCC 700392 / 26695) (Campylobacter pylori).